A 796-amino-acid chain; its full sequence is N-terminal acetyltransferase B complex subunit MDM20 (796 aa).

Ser2 is modified (N-acetylserine).

Belongs to the MDM20/NAA25 family. As to quaternary structure, component of the N-terminal acetyltransferase B (NatB) complex, which is composed of NAT3 and MDM20.

It is found in the cytoplasm. In terms of biological role, non-catalytic subunit of the NatB N-terminal acetyltransferase, which catalyzes acetylation of the amino-terminal methionine residues of all proteins beginning with Met-Asp or Met-Glu and of some proteins beginning with Met-Asn or Met-Met. NatB acetylates TPM1 protein and regulates tropomyocin-actin interactions. MDM20 is required for mitochondrial inheritance during budding and together with TPM1, is essential for the integrity and assembly of actin cables. Genetically interacts with CIN8. The sequence is that of N-terminal acetyltransferase B complex subunit MDM20 (MDM20) from Saccharomyces cerevisiae (strain ATCC 204508 / S288c) (Baker's yeast).